We begin with the raw amino-acid sequence, 334 residues long: Tryptophan--tRNA ligase (334 aa).

ATP-binding positions include 11-13 (QPS) and 19-20 (GN). Residues 12–20 (PSGELTIGN) carry the 'HIGH' region motif. Aspartate 135 contributes to the L-tryptophan binding site. ATP contacts are provided by residues 147-149 (GED), valine 186, and 195-199 (KMSKS). Positions 195-199 (KMSKS) match the 'KMSKS' region motif.

It belongs to the class-I aminoacyl-tRNA synthetase family. Homodimer.

The protein localises to the cytoplasm. The enzyme catalyses tRNA(Trp) + L-tryptophan + ATP = L-tryptophyl-tRNA(Trp) + AMP + diphosphate + H(+). Functionally, catalyzes the attachment of tryptophan to tRNA(Trp). This Salmonella typhi protein is Tryptophan--tRNA ligase.